The sequence spans 274 residues: Ciliary microtubule inner protein 2B (274 aa).

Disordered regions lie at residues 46-89 (SPGL…SSMV) and 119-171 (TQRN…MDDR). The span at 130-155 (LPKEAKGEKDVEKDQEPKPEVEKEPE) shows a compositional bias: basic and acidic residues.

Belongs to the CIMIP2 family. As to quaternary structure, microtubule inner protein component of sperm flagellar doublet microtubules. Expressed in trachea multiciliated cells.

It localises to the cytoplasm. It is found in the cytoskeleton. The protein localises to the cilium axoneme. The protein resides in the flagellum axoneme. Microtubule inner protein (MIP) part of the dynein-decorated doublet microtubules (DMTs) in cilia axoneme, which is required for motile cilia beating. This is Ciliary microtubule inner protein 2B (CIMIP2B) from Bos taurus (Bovine).